The following is a 555-amino-acid chain: Solute carrier family 22 member 2 (555 aa).

The Cytoplasmic portion of the chain corresponds to 1-21; that stretch reads MPTTVDDVLEHGGEFHFFQKQ. The chain crosses the membrane as a helical span at residues 22-42; the sequence is MFFLLALLSATFTPIYVGIVF. The Extracellular segment spans residues 43 to 150; sequence LGFTPDHRCR…LVCANSWMLD (108 aa). N72 is a glycosylation site (N-linked (GlcNAc...) asparagine). Residues 151–171 traverse the membrane as a helical segment; it reads LFQASVNVGFFFGSVSIGYIA. Topologically, residues 172–177 are cytoplasmic; it reads DRFGRK. The chain crosses the membrane as a helical span at residues 178 to 198; sequence LCLLTTVLINAAAGVLMAISP. The Extracellular portion of the chain corresponds to 199 to 210; it reads TYTWMLIFRLIQ. Residues 211 to 231 traverse the membrane as a helical segment; it reads GLVSKAGWLIGYILITEFVGR. The Cytoplasmic segment spans residues 232-238; that stretch reads RYRRTVG. A helical transmembrane segment spans residues 239–259; the sequence is IFYQVAYTVGLLVLAGVAYAL. Topologically, residues 260–263 are extracellular; sequence PHWR. Residues 264–284 form a helical membrane-spanning segment; sequence WLQFTVTLPNFFFLLYYWCIP. Positions 284–288 match the Proline-rich sequence motif; that stretch reads PESPR. Residues 285-348 lie on the Cytoplasmic side of the membrane; the sequence is ESPRWLISQN…VRTPQIRKHT (64 aa). A helical membrane pass occupies residues 349–369; it reads MILMYNWFTSSVLYQGLIMHM. The Extracellular segment spans residues 370 to 375; that stretch reads GLAGDN. Residues 376–396 traverse the membrane as a helical segment; that stretch reads IYLDFFYSALVEFPAAFMIIV. The Cytoplasmic portion of the chain corresponds to 397-404; that stretch reads TIDRIGRR. Residues 405–425 traverse the membrane as a helical segment; the sequence is YPWAASNMVAGAACLASVFIP. The Extracellular segment spans residues 426-432; it reads GDLQWLK. The chain crosses the membrane as a helical span at residues 433–453; it reads IIISCLGRMGITMAYEIVRLV. At 454–464 the chain is on the cytoplasmic side; that stretch reads NAELYPTFIRN. A helical membrane pass occupies residues 465 to 485; it reads LGVHICSSMCDIGGIITPFLV. The Extracellular portion of the chain corresponds to 486–494; the sequence is YRLTNIWLE. Residues 495 to 515 form a helical membrane-spanning segment; the sequence is LPLMVFGVLGLVAGGLVLLLP. Over 516 to 555 the chain is Cytoplasmic; that stretch reads ETKGKALPETIEEAENMQRPRKNKEKMIYLQVQKLDIPLN.

The protein belongs to the major facilitator (TC 2.A.1) superfamily. Organic cation transporter (TC 2.A.1.19) family. Tyrosine phosphorylated.

The protein localises to the basolateral cell membrane. Its subcellular location is the basal cell membrane. It localises to the apical cell membrane. It catalyses the reaction (R)-noradrenaline(out) = (R)-noradrenaline(in). The enzyme catalyses (R)-adrenaline(out) = (R)-adrenaline(in). It carries out the reaction serotonin(out) = serotonin(in). The catalysed reaction is dopamine(out) = dopamine(in). It catalyses the reaction histamine(out) = histamine(in). The enzyme catalyses thiamine(in) = thiamine(out). It carries out the reaction creatinine(in) = creatinine(out). The catalysed reaction is 1-methylnicotinamide(out) = 1-methylnicotinamide(in). It catalyses the reaction guanidine(out) = guanidine(in). The enzyme catalyses choline(out) = choline(in). It carries out the reaction agmatine(out) = agmatine(in). The catalysed reaction is putrescine(out) = putrescine(in). It catalyses the reaction spermidine(in) = spermidine(out). The enzyme catalyses tyramine(in) = tyramine(out). It carries out the reaction L-histidyl-L-proline diketopiperazine(in) = L-histidyl-L-proline diketopiperazine(out). The catalysed reaction is (R)-salsolinol(in) = (R)-salsolinol(out). It catalyses the reaction N-methyl-(R)-salsolinol(in) = N-methyl-(R)-salsolinol(out). The enzyme catalyses acetylcholine(in) = acetylcholine(out). It carries out the reaction prostaglandin F2alpha(out) = prostaglandin F2alpha(in). The catalysed reaction is prostaglandin E2(out) = prostaglandin E2(in). With respect to regulation, tyrosine phosphorylation of the transporter leads to activation of the transport activity. Inhibited by cGMP, most likely through a cGMP-binding protein that interacts with OCT2. Its function is as follows. Electrogenic voltage-dependent transporter that mediates the transport of a variety of organic cations such as endogenous bioactive amines, cationic drugs and xenobiotics. Functions as a Na(+)-independent, bidirectional uniporter. Cation cellular uptake or release is driven by the electrochemical potential, i.e. membrane potential and concentration gradient. However, may also engage electroneutral cation exchange when saturating concentrations of cation substrates are reached. Predominantly expressed at the basolateral membrane of hepatocytes and proximal tubules and involved in the uptake and disposition of cationic compounds by hepatic and renal clearance from the blood flow. Implicated in monoamine neurotransmitters uptake such as histamine, dopamine, adrenaline/epinephrine, noradrenaline/norepinephrine, serotonin and tyramine, thereby supporting a physiological role in the central nervous system by regulating interstitial concentrations of neurotransmitters. Also capable of transporting dopaminergic neuromodulators cyclo(his-pro), salsolinol and N-methyl-salsolinol, thereby involved in the maintenance of dopaminergic cell integrity in the central nervous system. Mediates the bidirectional transport of acetylcholine (ACh) at the apical membrane of ciliated cell in airway epithelium, thereby playing a role in luminal release of ACh from bronchial epithelium. Also transports guanidine and endogenous monoamines such as vitamin B1/thiamine, creatinine and N-1-methylnicotinamide (NMN). Mediates the uptake and efflux of quaternary ammonium compound choline. Mediates the bidirectional transport of polyamine agmatine and the uptake of polyamines putrescine and spermidine. Able to transport non-amine endogenous compounds such as prostaglandin E2 (PGE2) and prostaglandin F2-alpha (PGF2-alpha). Also involved in the uptake of xenobiotic 4-(4-(dimethylamino)styryl)-N-methylpyridinium (ASP). May contribute to regulate the transport of organic compounds in testis across the blood-testis-barrier. The chain is Solute carrier family 22 member 2 (SLC22A2) from Pongo abelii (Sumatran orangutan).